The primary structure comprises 796 residues: Bud site selection protein 27 (796 aa).

Positions 81-121 form a coiled coil; sequence KEEAITFVDDKLKLMEDAIEQFNLKIEEAKKTLDNLNHMED. The span at 152-168 shows a compositional bias: polar residues; sequence VISSSVTPTTKQPSQSN. 5 disordered regions span residues 152–197, 300–344, 421–458, 535–624, and 752–796; these read VISS…EENL, LRAQ…QVGF, EGEA…TTRS, EKEP…AKTG, and ATAS…DSKP. Basic and acidic residues-rich tracts occupy residues 169–197 and 306–318; these read SKKE…EENL and SQDH…DVNK. Positions 427-441 are enriched in basic residues; it reads SNRRTRVSRFRKDRA. A compositionally biased stretch (basic and acidic residues) spans 535 to 550; the sequence is EKEPEINSKSEFETPF. Basic residues predominate over residues 551-568; the sequence is KKKKLKSLQKPRSSKSMK. Acidic residues predominate over residues 579–589; sequence ISDDDYDDDDD. S580 carries the phosphoserine modification. Positions 601 to 610 are enriched in basic and acidic residues; that stretch reads NNTDEQDKFP.

The protein belongs to the prefoldin subunit alpha family.

The protein resides in the cytoplasm. Functionally, involved in gene expression controlled by TOR kinase and nutrient signaling. May also be involved in positioning the proximal bud pole signal. This Saccharomyces cerevisiae (strain ATCC 204508 / S288c) (Baker's yeast) protein is Bud site selection protein 27 (BUD27).